A 327-amino-acid polypeptide reads, in one-letter code: MTRQGMRDDLRGEADSVVHDGTDDIDNENDIDNGIDNENGNGIDVVLVTGLSGAGRGTAAKVLEDLGWYVADNLPPELIAQMVDLGLAAGSRITQLAAVMDVRSRGFTGDLDWVRSELATRNIVPRVVFLEASDDILVRRYEQNRRSHPLQGNQTLAEGIAAERAMLAPVRASADLVIDTSALSVHGLRDSIERAFAAETVAHTNVTVESFGYKYGLPMDADTVMDVRFLPNPHWIDRLRPHTGQNADVRDYVLGQPGADEFLDSYHQLLNVVIDGYRREGKRYMTVAIGCTGGKHRSVAMAEALAARLAGSDALTVRVLHRDLGRE.

The span at 1-22 shows a compositional bias: basic and acidic residues; the sequence is MTRQGMRDDLRGEADSVVHDGT. Residues 1-29 are disordered; that stretch reads MTRQGMRDDLRGEADSVVHDGTDDIDNEN. 50–57 is a binding site for ATP; that stretch reads GLSGAGRG. 101–104 contacts GTP; the sequence is DVRS.

It belongs to the RapZ-like family.

Functionally, displays ATPase and GTPase activities. The polypeptide is Nucleotide-binding protein Mflv_3714 (Mycolicibacterium gilvum (strain PYR-GCK) (Mycobacterium gilvum (strain PYR-GCK))).